The sequence spans 631 residues: MPRPALSVTSFCHRLGKRERKQSFMGNSGNSWSHTPFPKLELGLGPQPMAPRELPTCSICLERLRDPISLDCGHDFCIRCFSTHRLPGCEPPCCPECRKICKQKRGLRSLGEKMKLLPQRPLPPALQETCPVRAEPLLLVRINASGGLILRMGAINRCLKHPLARDTPVCLLAVLGEQHSGKSFLLNHLLQGLPGLESGEGGRPRGGEASLQGCRWGANGLARGIWMWSHPFLLGKEGKKVAVFLVDTGDAMSPELSRETRIKLCALTTMLSSYQILSTSQELKDTDLDYLEMFVHVAEVMGKHYGMVPIQHLDLLVRDSSHPNKAGQGHVGNIFQRLSGRYPKVQELLQGKRARCCLLPAPGRRRMNQGHASPGDTDDDFRHLLGAYVSDVLSAAPQHAKSRCQGYWNEGRAVARGDRRLLTGQQLAQEIKNLSGWMGRTGPGFTSPDEMAAQLHDLRKVEAAKREFEEYVRQQDVATKRIFSALRVLPDTMRNLLSTQKDAILARHGVALLCKGRDQTLEALEAELQATAKAFMDSYTMRFCGHLAAVGGAVGAGLMGLAGGVVGAGMAAAALAAEAGMVAAGAAVGATGAAVVGGGVGAGLAATVGCMEKEEDERLLEGDREPLLQEE.

Residues 57 to 98 (CSICLERLRDPISLDCGHDFCIRCFSTHRLPGCEPPCCPECR) form an RING-type zinc finger. Residues 131 to 631 (PVRAEPLLLV…GDREPLLQEE (501 aa)) are interaction with ZBTB16. Residues 166 to 397 (DTPVCLLAVL…YVSDVLSAAP (232 aa)) enclose the GB1/RHD3-type G domain. 318 to 319 (RD) provides a ligand contact to GTP. 2 helical membrane-spanning segments follow: residues 547-567 (LAAVGGAVGAGLMGLAGGVVG) and 580-600 (GMVAAGAAVGATGAAVVGGGV).

Belongs to the TRAFAC class dynamin-like GTPase superfamily. GB1/RHD3 GTPase family. GB1 subfamily. As to quaternary structure, self-associates. Interacts with SP1 in an oxidative stress-regulated manner. Interacts with SIGMAR1 in an oxidative stress-regulated manner. Interacts with ZBTB16 (via C2H2-type zinc finger domains 1 and 2). In terms of processing, auto-ubiquitinated. Predominantly expressed in brain. Decreased expression in glioma brain tumors as compared to normal brains (at protein level).

It localises to the membrane. The protein localises to the cytoplasm. Its subcellular location is the nucleus. The protein resides in the nuclear body. It is found in the nucleoplasm. It localises to the endosome. The protein localises to the cytoplasmic vesicle. Its subcellular location is the secretory vesicle. The protein resides in the synaptic vesicle. It is found in the postsynaptic density. It localises to the perikaryon. The protein localises to the cell projection. Its subcellular location is the neuron projection. It carries out the reaction S-ubiquitinyl-[E2 ubiquitin-conjugating enzyme]-L-cysteine + [acceptor protein]-L-lysine = [E2 ubiquitin-conjugating enzyme]-L-cysteine + N(6)-ubiquitinyl-[acceptor protein]-L-lysine.. Its pathway is protein modification; protein ubiquitination. In terms of biological role, E3 ubiquitin-protein ligase that plays an important role in neuronal differentiation, including neurogenesis and gliogenesis, during brain development. During embryonic development initiates neuronal differentiation by inducing cell cycle arrest at the G0/G1 phase through up-regulation of cell-cycle regulatory proteins. Plays a role not only in the fetal period during the development of the nervous system, but also in the adult brain, where it is involved in the maintenance of neural functions and protection of the nervous tissue cells from oxidative stress-induced damage. Exhibits GTPase and E3 ubiquitin-protein ligase activities. Regulates dendritic spine density and synaptic neurotransmission; its ability to hydrolyze GTP is involved in the maintenance of dendritic spine density. In Homo sapiens (Human), this protein is RING finger protein 112 (RNF112).